The following is a 272-amino-acid chain: Regulatory protein RecX (272 aa).

This sequence belongs to the RecX family.

It localises to the cytoplasm. Modulates RecA activity. In Staphylococcus aureus (strain Newman), this protein is Regulatory protein RecX.